The following is a 458-amino-acid chain: Argininosuccinate lyase (458 aa).

Belongs to the lyase 1 family. Argininosuccinate lyase subfamily.

The protein resides in the cytoplasm. It catalyses the reaction 2-(N(omega)-L-arginino)succinate = fumarate + L-arginine. It functions in the pathway amino-acid biosynthesis; L-arginine biosynthesis; L-arginine from L-ornithine and carbamoyl phosphate: step 3/3. The sequence is that of Argininosuccinate lyase from Salmonella choleraesuis (strain SC-B67).